The sequence spans 296 residues: Chronophin (296 aa).

The active-site Nucleophile is Asp-25. The Mg(2+) site is built by Asp-25 and Asp-27. Asp-27 serves as the catalytic Proton donor. Substrate-binding positions include 58-60 (SNN), His-182, and Lys-213. Asp-238 is a binding site for Mg(2+).

The protein belongs to the HAD-like hydrolase superfamily. Homodimer. Mg(2+) is required as a cofactor. In terms of tissue distribution, ubiquitously expressed (at protein level). Highly expressed in all the regions of central nerve system except the spinal cord. Also expressed at high level in liver and testis. In fetus, it is weakly expressed in all organs except brain.

It is found in the cytoplasm. It localises to the cytosol. Its subcellular location is the cytoskeleton. The protein localises to the cell projection. The protein resides in the ruffle membrane. It is found in the lamellipodium membrane. It localises to the cell membrane. The catalysed reaction is pyridoxal 5'-phosphate + H2O = pyridoxal + phosphate. It carries out the reaction pyridoxine 5'-phosphate + H2O = pyridoxine + phosphate. It catalyses the reaction pyridoxamine + phosphate = pyridoxamine 5'-phosphate + H2O. The enzyme catalyses O-phospho-L-seryl-[protein] + H2O = L-seryl-[protein] + phosphate. With respect to regulation, inhibited by NaF, Zn(2+), Ca(2+), Mn(2+) and EDTA. Functions as a pyridoxal phosphate (PLP) phosphatase, which also catalyzes the dephosphorylation of pyridoxine 5'-phosphate (PNP) and pyridoxamine 5'-phosphate (PMP), with order of substrate preference PLP &gt; PNP &gt; PMP and therefore plays a role in vitamin B6 metabolism. Also functions as a protein serine phosphatase that specifically dephosphorylates 'Ser-3' in proteins of the actin-depolymerizing factor (ADF)/cofilin family like CFL1 and DSTN. Thereby, regulates cofilin-dependent actin cytoskeleton reorganization, being required for normal progress through mitosis and normal cytokinesis. Does not dephosphorylate phosphothreonines in LIMK1. Does not dephosphorylate peptides containing phosphotyrosine. The protein is Chronophin of Homo sapiens (Human).